We begin with the raw amino-acid sequence, 527 residues long: (3S)-3-amino-3-(3-chloro-4-hydroxyphenyl)propanoyl-[peptidyl-carrier protein SgcC2] monooxygenase (527 aa).

Over residues 1-10 the composition is skewed to basic and acidic residues; that stretch reads MPHGAEREAS. The disordered stretch occupies residues 1 to 22; it reads MPHGAEREASPAEESAGTRPLT. FAD-binding positions include 161–163, 167–170, and threonine 202; these read HAF and PVDR.

The protein belongs to the FADH(2)-utilizing monooxygenase family. In terms of assembly, homotetramer.

It carries out the reaction (3S)-3-amino-3-(3-chloro-4-hydroxyphenyl)propanoyl-[SgcC2 peptidyl-carrier protein] + FADH2 + O2 = (3S)-3-amino-3-(3-chloro-4,5-dihydroxyphenyl)propanoyl-[SgcC2 peptidyl-carrier protein] + FAD + H2O + H(+). The protein operates within antibiotic biosynthesis. Its activity is regulated as follows. The SgcE6-SgcC hydroxylation activity decreases in the presence of excess FAD. In terms of biological role, oxygenase component of a two-component system involved in the biosynthesis of the enediyne antitumor antibiotic C-1027. Uses FADH(2) supplied by SgcE6 to catalyze the C-5 hydroxylation of (S)-3-chloro-beta-tyrosyl-S-SgcC2. Can also efficiently catalyze the regioselective hydroxylation of other 3-substituted beta-tyrosyl-S-SgcC2 analogs, including the bromo-, iodo-, fluoro-, and methyl-substituted analogs, but does not accept 3-hydroxy-beta-tyrosyl-S-SgcC2 as a substrate. Is only active with SgcC2 (peptidyl carrier protein)-tethered substrates. The chain is (3S)-3-amino-3-(3-chloro-4-hydroxyphenyl)propanoyl-[peptidyl-carrier protein SgcC2] monooxygenase from Streptomyces globisporus.